A 361-amino-acid polypeptide reads, in one-letter code: uncharacterized protein (361 aa).

The segment covering methionine 1–proline 10 has biased composition (basic residues). Disordered stretches follow at residues methionine 1 to histidine 82 and alanine 94 to serine 147. Basic and acidic residues-rich tracts occupy residues lysine 44 to asparagine 57 and phenylalanine 120 to leucine 134. The segment covering glutamine 135–serine 147 has biased composition (polar residues). Positions asparagine 295–aspartate 349 form a coiled coil.

The protein localises to the cytoplasm. It is found in the nucleus. This is an uncharacterized protein from Schizosaccharomyces pombe (strain 972 / ATCC 24843) (Fission yeast).